A 78-amino-acid chain; its full sequence is Toxin BmTxKS4 (78 aa).

The N-terminal stretch at 1-21 is a signal peptide; it reads MKLKISFLILVLFSVFFAIEG. Residues 22–32 constitute a propeptide that is removed on maturation; that stretch reads IIKWFPASVNG.

In terms of processing, contains 3 disulfide bonds. In terms of tissue distribution, expressed by the venom gland.

The protein resides in the secreted. Its function is as follows. Reversibly inhibits potassium channels. The polypeptide is Toxin BmTxKS4 (Olivierus martensii (Manchurian scorpion)).